We begin with the raw amino-acid sequence, 529 residues long: Delayed-rectifier potassium channel regulatory subunit KCNS1 (529 aa).

At 1-217 (MLMLLVRGTH…LTMENPGYSL (217 aa)) the chain is on the cytoplasmic side. Residues 218–239 (PSKLFSCVSISVVLASIAAMCI) form a helical membrane-spanning segment. Residues 240 to 270 (HSLPEYQAREAAAAVAAVAAGRSPEGVRDDP) lie on the Extracellular side of the membrane. Residues 271-293 (VLRRLEYFCIAWFSFEVSSRLLL) traverse the membrane as a helical segment. Topologically, residues 294–304 (APSTRNFFCHP) are cytoplasmic. A helical transmembrane segment spans residues 305 to 322 (LNLIDIVSVLPFYLTLLA). The Extracellular portion of the chain corresponds to 323-340 (GVALGDQGGTGGKELGHL). A helical; Voltage-sensor transmembrane segment spans residues 341-361 (GKVVQVFRLMRIFRVLKLARH). The Cytoplasmic segment spans residues 362–376 (STGLRSLGATLKHSY). The chain crosses the membrane as a helical span at residues 377-398 (REVGILLLYLAVGVSVFSGVAY). Over 399-411 (TAEKEEDVGFNTI) the chain is Extracellular. An intramembrane region (helical) is located at residues 412-423 (PACWWWGTVSMT). A Selectivity filter motif is present at residues 424-429 (TVGYGD). An intramembrane segment occupies 424-431 (TVGYGDVV). Residues 432–438 (PVTVAGK) are Extracellular-facing. Residues 439 to 467 (LAASGCILGGILVVALPITIIFNKFSHFY) traverse the membrane as a helical segment. Over 468–529 (RRQKALEAAV…PSEPPHPQMY (62 aa)) the chain is Cytoplasmic. The segment at 494 to 529 (GVSEASLETSRETSQEGRSADLETQAPSEPPHPQMY) is disordered. The segment covering 502–514 (TSRETSQEGRSAD) has biased composition (basic and acidic residues).

The protein belongs to the potassium channel family. S (TC 1.A.1.2) subfamily. Kv9.1/KCNS1 sub-subfamily. Heterotetramer with KCNB1. Heterotetramer with KCNB2. Does not form homomultimers.

The protein resides in the cell membrane. Functionally, potassium channel regulatory subunit that modulate the delayed rectifier voltage-gated potassium channel activity of KCNB1 and KCNB2 by altering their kinetics, expression levels, and shifting the half-inactivation potential to more polarized values. While it does not form functional channels on its own, it can form functional heterotetrameric channels with KCNB1 and KCNB2. Each regulatory subunit has unique regulatory properties that can lead to extensive inhibition, significant changes in kinetics, and/or substantial shifts in the voltage dependencies of the inactivation process. In Macaca mulatta (Rhesus macaque), this protein is Delayed-rectifier potassium channel regulatory subunit KCNS1.